The primary structure comprises 254 residues: Protein CbbY, plasmid (254 aa).

The protein belongs to the HAD-like hydrolase superfamily. CbbY/CbbZ/Gph/YieH family.

The polypeptide is Protein CbbY, plasmid (cbbYP) (Cupriavidus necator (strain ATCC 17699 / DSM 428 / KCTC 22496 / NCIMB 10442 / H16 / Stanier 337) (Ralstonia eutropha)).